A 209-amino-acid polypeptide reads, in one-letter code: High frequency lysogenization protein HflD homolog (209 aa).

This sequence belongs to the HflD family.

The protein resides in the cytoplasm. It localises to the cell inner membrane. This Saccharophagus degradans (strain 2-40 / ATCC 43961 / DSM 17024) protein is High frequency lysogenization protein HflD homolog.